The chain runs to 95 residues: Small ribosomal subunit protein bS6 (95 aa).

It belongs to the bacterial ribosomal protein bS6 family.

Functionally, binds together with bS18 to 16S ribosomal RNA. In Corynebacterium efficiens (strain DSM 44549 / YS-314 / AJ 12310 / JCM 11189 / NBRC 100395), this protein is Small ribosomal subunit protein bS6.